The primary structure comprises 367 residues: Phosphoribosylaminoimidazole-succinocarboxamide synthase (367 aa).

The protein belongs to the SAICAR synthetase family.

It carries out the reaction 5-amino-1-(5-phospho-D-ribosyl)imidazole-4-carboxylate + L-aspartate + ATP = (2S)-2-[5-amino-1-(5-phospho-beta-D-ribosyl)imidazole-4-carboxamido]succinate + ADP + phosphate + 2 H(+). It functions in the pathway purine metabolism; IMP biosynthesis via de novo pathway; 5-amino-1-(5-phospho-D-ribosyl)imidazole-4-carboxamide from 5-amino-1-(5-phospho-D-ribosyl)imidazole-4-carboxylate: step 1/2. The sequence is that of Phosphoribosylaminoimidazole-succinocarboxamide synthase from Shewanella amazonensis (strain ATCC BAA-1098 / SB2B).